The chain runs to 319 residues: Pantothenate kinase (319 aa).

96 to 103 (GSVAVGKS) contributes to the ATP binding site.

It belongs to the prokaryotic pantothenate kinase family.

The protein resides in the cytoplasm. The enzyme catalyses (R)-pantothenate + ATP = (R)-4'-phosphopantothenate + ADP + H(+). It functions in the pathway cofactor biosynthesis; coenzyme A biosynthesis; CoA from (R)-pantothenate: step 1/5. In Bacillus velezensis (strain DSM 23117 / BGSC 10A6 / LMG 26770 / FZB42) (Bacillus amyloliquefaciens subsp. plantarum), this protein is Pantothenate kinase.